The chain runs to 404 residues: 4-hydroxyphenylpyruvate dioxygenase (404 aa).

VOC domains follow at residues 28 to 163 (GYDH…FIQR) and 194 to 353 (YVDH…IFTK). Fe cation contacts are provided by histidine 197, histidine 280, and glutamate 364.

Belongs to the 4HPPD family. The cofactor is Fe cation.

It catalyses the reaction 3-(4-hydroxyphenyl)pyruvate + O2 = homogentisate + CO2. It participates in amino-acid degradation; L-phenylalanine degradation; acetoacetate and fumarate from L-phenylalanine: step 3/6. Its function is as follows. Key enzyme in the degradation of tyrosine. The polypeptide is 4-hydroxyphenylpyruvate dioxygenase (TFA) (Tetrahymena thermophila).